The following is a 261-amino-acid chain: Cytochrome c oxidase subunit 3 (261 aa).

Topologically, residues 1-15 (MTNQLHPFHMTNPSP) are mitochondrial matrix. A helical transmembrane segment spans residues 16 to 34 (WPLTGATAALLMTSGLIMW). Over 35-40 (FHYNSS) the chain is Mitochondrial intermembrane. The helical transmembrane segment at 41–66 (QLIMLGLLIMLLTLTQWWRDIVREST) threads the bilayer. The Mitochondrial matrix segment spans residues 67–72 (FQGHHT). Residues 73 to 105 (PSVQNNLRYGMILFITSEILFFTGFFWAFYHSS) form a helical membrane-spanning segment. The Mitochondrial intermembrane segment spans residues 106–128 (LSPTAELGNIWPPTGITPLNPFE). A helical membrane pass occupies residues 129 to 152 (VPLLNTAVLLASGVTITWAHHSLM). The Mitochondrial matrix segment spans residues 153–155 (EGN). A helical transmembrane segment spans residues 156 to 183 (RPQTLQALTLTIILGTYFTILQAMEYFE). At 184 to 190 (ASFTIAD) the chain is on the mitochondrial intermembrane side. A helical transmembrane segment spans residues 191–223 (SIYGSTFFVATGFHGLHVIIGSTFLIVCLMRQL). Topologically, residues 224–232 (KYHFTSHHH) are mitochondrial matrix. The helical transmembrane segment at 233-256 (FGFEAAAWYWHFVDVIWLFLYLSI) threads the bilayer. At 257 to 261 (YWWGS) the chain is on the mitochondrial intermembrane side.

It belongs to the cytochrome c oxidase subunit 3 family. In terms of assembly, component of the cytochrome c oxidase (complex IV, CIV), a multisubunit enzyme composed of 14 subunits. The complex is composed of a catalytic core of 3 subunits MT-CO1, MT-CO2 and MT-CO3, encoded in the mitochondrial DNA, and 11 supernumerary subunits COX4I, COX5A, COX5B, COX6A, COX6B, COX6C, COX7A, COX7B, COX7C, COX8 and NDUFA4, which are encoded in the nuclear genome. The complex exists as a monomer or a dimer and forms supercomplexes (SCs) in the inner mitochondrial membrane with NADH-ubiquinone oxidoreductase (complex I, CI) and ubiquinol-cytochrome c oxidoreductase (cytochrome b-c1 complex, complex III, CIII), resulting in different assemblies (supercomplex SCI(1)III(2)IV(1) and megacomplex MCI(2)III(2)IV(2)).

The protein resides in the mitochondrion inner membrane. It catalyses the reaction 4 Fe(II)-[cytochrome c] + O2 + 8 H(+)(in) = 4 Fe(III)-[cytochrome c] + 2 H2O + 4 H(+)(out). Functionally, component of the cytochrome c oxidase, the last enzyme in the mitochondrial electron transport chain which drives oxidative phosphorylation. The respiratory chain contains 3 multisubunit complexes succinate dehydrogenase (complex II, CII), ubiquinol-cytochrome c oxidoreductase (cytochrome b-c1 complex, complex III, CIII) and cytochrome c oxidase (complex IV, CIV), that cooperate to transfer electrons derived from NADH and succinate to molecular oxygen, creating an electrochemical gradient over the inner membrane that drives transmembrane transport and the ATP synthase. Cytochrome c oxidase is the component of the respiratory chain that catalyzes the reduction of oxygen to water. Electrons originating from reduced cytochrome c in the intermembrane space (IMS) are transferred via the dinuclear copper A center (CU(A)) of subunit 2 and heme A of subunit 1 to the active site in subunit 1, a binuclear center (BNC) formed by heme A3 and copper B (CU(B)). The BNC reduces molecular oxygen to 2 water molecules using 4 electrons from cytochrome c in the IMS and 4 protons from the mitochondrial matrix. This chain is Cytochrome c oxidase subunit 3 (MT-CO3), found in Pelomedusa subrufa (African side-necked turtle).